The following is a 784-amino-acid chain: Cadherin-5 (784 aa).

The first 24 residues, 1–24, serve as a signal peptide directing secretion; sequence MQRLTELATALGAFLGLLAVAAMA. Positions 25 to 45 are excised as a propeptide; it reads GPNFPQIDTPNMLPAHHRQKR. Cadherin domains follow at residues 46 to 149, 150 to 256, 257 to 371, 372 to 476, and 477 to 593; these read DWIW…WPVF, SHQV…FPVF, TQST…PPVF, QRHF…DNPP, and EFAQ…MAAQ. The Extracellular segment spans residues 46–599; it reads DWIWNQMHID…MAAQAGVSIQ (554 aa). 2 residues coordinate Ca(2+): Glu56 and Glu57. Asn59 is a glycosylation site (N-linked (GlcNAc...) asparagine). Residues Asp107, Glu109, Asp141, Ile142, Asn143, Asp144, and Asn145 each contribute to the Ca(2+) site. Asn155 is a glycosylation site (N-linked (GlcNAc...) asparagine). Ca(2+) is bound by residues Asp175, Asp177, His184, and Asp229. N-linked (GlcNAc...) asparagine glycosylation is found at Asn441, Asn523, and Asn535. The helical transmembrane segment at 600-620 threads the bilayer; sequence ALVAIFLCILTITVITLLIIL. A required for interaction with PALS1 region spans residues 621-660; that stretch reads RRRIRKQAHAHSKSALEIHEQLVTYDEEGGGEMDTTSYDV. Residues 621–784 lie on the Cytoplasmic side of the membrane; it reads RRRIRKQAHA…GSDPQEELII (164 aa).

Part of a complex composed of AMOTL2, MAGI1 and CDH5, within the complex AMOTL2 acts as a scaffold protein for the interaction of MAGI1 with CDH5. The complex is required for coupling actin fibers to cell junctions in endothelial cells. Within the complex AMOTL2 (via its N-terminus) interacts with CDH5. Interacts (via cadherin 5 domain) with PTPRB. Interacts with TRPC4. Interacts with KRIT1. Interacts with PARD3. Interacts with RTN4 (isoform B). Interacts with PALS1; the interaction promotes PALS1 localization to cell junctions and is required for CDH5-mediated vascular lumen formation and endothelial cell polarity. Interacts with CTNND1/p120-catenin; the interaction controls CADH5 endocytosis. Post-translationally, phosphorylated on tyrosine residues by KDR/VEGFR-2. Dephosphorylated by PTPRB. O-glycosylated. In terms of tissue distribution, expressed in postnatal endothelial cells of the retinal vascular plexus (at protein level).

It is found in the cell junction. It localises to the adherens junction. Its subcellular location is the cell membrane. The protein resides in the cytoplasm. Its function is as follows. Cadherins are calcium-dependent cell adhesion proteins. They preferentially interact with themselves in a homophilic manner in connecting cells; cadherins may thus contribute to the sorting of heterogeneous cell types. This cadherin may play an important role in endothelial cell biology through control of the cohesion and organization of the intercellular junctions. It associates with alpha-catenin forming a link to the cytoskeleton. Plays a role in coupling actin fibers to cell junctions in endothelial cells, via acting as a cell junctional complex anchor for AMOTL2 and MAGI1. Acts in concert with KRIT1 and PALS1 to establish and maintain correct endothelial cell polarity and vascular lumen. These effects are mediated by recruitment and activation of the Par polarity complex and RAP1B. Required for activation of PRKCZ and for localization of phosphorylated PRKCZ, PARD3, TIAM1 and RAP1B to the cell junction. Associates with CTNND1/p120-catenin to control CADH5 endocytosis. The polypeptide is Cadherin-5 (Mus musculus (Mouse)).